Reading from the N-terminus, the 293-residue chain is 4-hydroxy-tetrahydrodipicolinate synthase (293 aa).

Thr-46 provides a ligand contact to pyruvate. The active-site Proton donor/acceptor is the Tyr-133. Catalysis depends on Lys-161, which acts as the Schiff-base intermediate with substrate. Val-202 is a binding site for pyruvate.

It belongs to the DapA family. In terms of assembly, homotetramer; dimer of dimers.

It localises to the cytoplasm. The enzyme catalyses L-aspartate 4-semialdehyde + pyruvate = (2S,4S)-4-hydroxy-2,3,4,5-tetrahydrodipicolinate + H2O + H(+). It functions in the pathway amino-acid biosynthesis; L-lysine biosynthesis via DAP pathway; (S)-tetrahydrodipicolinate from L-aspartate: step 3/4. Its function is as follows. Catalyzes the condensation of (S)-aspartate-beta-semialdehyde [(S)-ASA] and pyruvate to 4-hydroxy-tetrahydrodipicolinate (HTPA). This chain is 4-hydroxy-tetrahydrodipicolinate synthase, found in Wolbachia pipientis wMel.